Reading from the N-terminus, the 1085-residue chain is DNA polymerase (1085 aa).

Residues 1059 to 1085 (YDQKRPNPRPQEPLLENPFWDDSSQTA) are disordered.

Belongs to the DNA polymerase type-B family. As to quaternary structure, heterodimer with the terminal protein; this heterodimer binds to bp 9 to 18 of the genome. Forms a complex with viral pTP, DBP and hosts NFIA and POU2F1/OCT1 for initiation of replication.

The protein resides in the host nucleus. It catalyses the reaction DNA(n) + a 2'-deoxyribonucleoside 5'-triphosphate = DNA(n+1) + diphosphate. In terms of biological role, eukaryotic-type DNA polymerase involved in viral genomic replication. DNA synthesis is protein primed, and acts in a strand displacement replication. Functionally, eukaryotic-type DNA polymerase involved in viral genomic replication. DNA synthesis is protein primed, and acts in a strand displacement replication. Assembles in complex with viral pTP, DBP, host NFIA and host POU2F1/OCT1 on viral origin of replication. The polymerase covalently transfers dCMP onto pTP, thereby initiating complementary strand synthesis. The sequence is that of DNA polymerase from Pantherophis guttatus (Corn snake).